The chain runs to 212 residues: Methylthioribulose-1-phosphate dehydratase (212 aa).

Residues H97 and H99 each contribute to the Zn(2+) site.

It belongs to the aldolase class II family. MtnB subfamily. Homotetramer. Requires Zn(2+) as cofactor.

It catalyses the reaction 5-(methylsulfanyl)-D-ribulose 1-phosphate = 5-methylsulfanyl-2,3-dioxopentyl phosphate + H2O. Its pathway is amino-acid biosynthesis; L-methionine biosynthesis via salvage pathway; L-methionine from S-methyl-5-thio-alpha-D-ribose 1-phosphate: step 2/6. Functionally, catalyzes the dehydration of methylthioribulose-1-phosphate (MTRu-1-P) into 2,3-diketo-5-methylthiopentyl-1-phosphate (DK-MTP-1-P). This Bacillus cytotoxicus (strain DSM 22905 / CIP 110041 / 391-98 / NVH 391-98) protein is Methylthioribulose-1-phosphate dehydratase.